The sequence spans 330 residues: tRNA (guanine-N(7)-)-methyltransferase (330 aa).

Positions 1–27 (MSTPPAKRQKRDQYRKRAAAAANEDTG) are disordered. A compositionally biased stretch (basic residues) spans 7-18 (KRQKRDQYRKRA). Residues G95 and 118 to 119 (EI) contribute to the S-adenosyl-L-methionine site. Positions 138–185 (QNQLKNSSTTASESPAPAIPAEPATDGASPDAASTPETSNSPVPGGYQ) are disordered. Residues 144-162 (SSTTASESPAPAIPAEPAT) show a composition bias toward low complexity. The segment covering 172 to 185 (TPETSNSPVPGGYQ) has biased composition (polar residues). S-adenosyl-L-methionine is bound by residues 193 to 194 (NT) and C213. D216 is a catalytic residue. 302–304 (TEE) provides a ligand contact to S-adenosyl-L-methionine.

This sequence belongs to the class I-like SAM-binding methyltransferase superfamily. TrmB family. As to quaternary structure, forms a complex with trm82.

The protein localises to the nucleus. The enzyme catalyses guanosine(46) in tRNA + S-adenosyl-L-methionine = N(7)-methylguanosine(46) in tRNA + S-adenosyl-L-homocysteine. It functions in the pathway tRNA modification; N(7)-methylguanine-tRNA biosynthesis. In terms of biological role, catalyzes the formation of N(7)-methylguanine at position 46 (m7G46) in tRNA. In Aspergillus oryzae (strain ATCC 42149 / RIB 40) (Yellow koji mold), this protein is tRNA (guanine-N(7)-)-methyltransferase (trm8).